Here is a 399-residue protein sequence, read N- to C-terminus: Succinate--CoA ligase [ADP-forming] subunit beta (399 aa).

Residues K9 to E254 enclose the ATP-grasp domain. Residues K46, G53–G55, E109, A112, and E117 contribute to the ATP site. Mg(2+) is bound by residues N209 and D223. Substrate is bound by residues N274 and G331 to M333.

The protein belongs to the succinate/malate CoA ligase beta subunit family. As to quaternary structure, heterotetramer of two alpha and two beta subunits. Mg(2+) is required as a cofactor.

The enzyme catalyses succinate + ATP + CoA = succinyl-CoA + ADP + phosphate. The catalysed reaction is GTP + succinate + CoA = succinyl-CoA + GDP + phosphate. It participates in carbohydrate metabolism; tricarboxylic acid cycle; succinate from succinyl-CoA (ligase route): step 1/1. Succinyl-CoA synthetase functions in the citric acid cycle (TCA), coupling the hydrolysis of succinyl-CoA to the synthesis of either ATP or GTP and thus represents the only step of substrate-level phosphorylation in the TCA. The beta subunit provides nucleotide specificity of the enzyme and binds the substrate succinate, while the binding sites for coenzyme A and phosphate are found in the alpha subunit. The chain is Succinate--CoA ligase [ADP-forming] subunit beta from Caulobacter sp. (strain K31).